A 1256-amino-acid polypeptide reads, in one-letter code: Muramidase-released protein (1256 aa).

An N-terminal signal peptide occupies residues 1-47 (MRRSNKKSFDWYGTKQQFSIRKYHFGAASVLLGVSLVLGAGAQVVKA). Small repeat units follow at residues 663-681 (KTTG…VYEK) and 839-861 (KTDG…VYQK). Disordered stretches follow at residues 873 to 949 (PETD…VDTP), 967 to 994 (GNPI…KTVT), and 1028 to 1049 (KEPV…TDNK). A Large repeat occupies 953–1006 (VPVKKVVTNHVDEEGNPIAPQEEGTKPNKSIPGYEFTGKTVTDEDGNTTHIYKK). Residues 1033–1045 (DTPTSPEGTPYDT) are compositionally biased toward polar residues. The stretch at 1064–1084 (RVDGTENGKVVEGETVVTYVY) is one Small repeat. Large repeat units lie at residues 1089–1142 (TPAK…IYKK) and 1143–1195 (TPAK…IYRK). Positions 1102–1137 (EGNPVAPQEEGTKPNKSIPGYEFTGKTVTDEDGNTT) are disordered. A disordered region spans residues 1196–1229 (LSNKPTTPEKETPAKPQAGKTASGKAQLPNTGEA). Residues 1223-1227 (LPNTG) carry the LPXTG sorting signal motif. Thr1226 carries the pentaglycyl murein peptidoglycan amidated threonine modification. Residues 1227-1256 (GEASSVAGALGTAMLVATLAFARKRRRNED) constitute a propeptide, removed by sortase.

Its subcellular location is the secreted. The protein resides in the cell wall. The chain is Muramidase-released protein (mrp) from Streptococcus suis.